The primary structure comprises 177 residues: Ribonuclease M5 (177 aa).

The region spanning 5-99 (KQIIIVEGKT…NKTSKKIGIA (95 aa)) is the Toprim domain. Positions 11, 59, and 61 each coordinate Mg(2+).

The protein belongs to the ribonuclease M5 family. It depends on Mg(2+) as a cofactor.

It localises to the cytoplasm. The enzyme catalyses Endonucleolytic cleavage of RNA, removing 21 and 42 nucleotides, respectively, from the 5'- and 3'-termini of a 5S-rRNA precursor.. Functionally, required for correct processing of both the 5' and 3' ends of 5S rRNA precursor. Cleaves both sides of a double-stranded region yielding mature 5S rRNA in one step. This Mycoplasma mycoides subsp. mycoides SC (strain CCUG 32753 / NCTC 10114 / PG1) protein is Ribonuclease M5.